A 232-amino-acid polypeptide reads, in one-letter code: NAD(P)H-quinone oxidoreductase subunit K 1 (232 aa).

Residues Cys-49, Cys-50, Cys-114, and Cys-145 each coordinate [4Fe-4S] cluster.

Belongs to the complex I 20 kDa subunit family. NDH-1 can be composed of about 15 different subunits; different subcomplexes with different compositions have been identified which probably have different functions. [4Fe-4S] cluster is required as a cofactor.

It localises to the cellular thylakoid membrane. It carries out the reaction a plastoquinone + NADH + (n+1) H(+)(in) = a plastoquinol + NAD(+) + n H(+)(out). The enzyme catalyses a plastoquinone + NADPH + (n+1) H(+)(in) = a plastoquinol + NADP(+) + n H(+)(out). In terms of biological role, NDH-1 shuttles electrons from an unknown electron donor, via FMN and iron-sulfur (Fe-S) centers, to quinones in the respiratory and/or the photosynthetic chain. The immediate electron acceptor for the enzyme in this species is believed to be plastoquinone. Couples the redox reaction to proton translocation, and thus conserves the redox energy in a proton gradient. Cyanobacterial NDH-1 also plays a role in inorganic carbon-concentration. The protein is NAD(P)H-quinone oxidoreductase subunit K 1 of Acaryochloris marina (strain MBIC 11017).